Reading from the N-terminus, the 106-residue chain is Large ribosomal subunit protein P1B (106 aa).

At Ser-2 the chain carries N-acetylserine. Residues 69-82 are compositionally biased toward low complexity; the sequence is AGAASGAAAAGGDA. Residues 69–106 form a disordered region; that stretch reads AGAASGAAAAGGDAAAEEEKEEEAAEESDDDMGFGLFD. Residues 83-100 show a composition bias toward acidic residues; that stretch reads AAEEEKEEEAAEESDDDM. Residue Ser-96 is modified to Phosphoserine.

It belongs to the eukaryotic ribosomal protein P1/P2 family. As to quaternary structure, component of the large ribosomal subunit (LSU). Mature yeast ribosomes consist of a small (40S) and a large (60S) subunit. The 40S small subunit contains 1 molecule of ribosomal RNA (18S rRNA) and 33 different proteins (encoded by 57 genes). The large 60S subunit contains 3 rRNA molecules (25S, 5.8S and 5S rRNA) and 46 different proteins (encoded by 81 genes). The 5 acidic ribosomal P-proteins form the stalk structure of the 60S subunit. They are organized as a pentameric complex in which uL10/P0 interacts with 2 heterodimers, P1A-P2B and P1B-P2A.

It is found in the cytoplasm. In terms of biological role, component of the ribosome, a large ribonucleoprotein complex responsible for the synthesis of proteins in the cell. The small ribosomal subunit (SSU) binds messenger RNAs (mRNAs) and translates the encoded message by selecting cognate aminoacyl-transfer RNA (tRNA) molecules. The large subunit (LSU) contains the ribosomal catalytic site termed the peptidyl transferase center (PTC), which catalyzes the formation of peptide bonds, thereby polymerizing the amino acids delivered by tRNAs into a polypeptide chain. The nascent polypeptides leave the ribosome through a tunnel in the LSU and interact with protein factors that function in enzymatic processing, targeting, and the membrane insertion of nascent chains at the exit of the ribosomal tunnel. The protein is Large ribosomal subunit protein P1B of Saccharomyces cerevisiae (strain ATCC 204508 / S288c) (Baker's yeast).